The following is an 80-amino-acid chain: Metallothionein-like protein 1 (80 aa).

It belongs to the metallothionein superfamily. Type 15 family.

Metallothioneins have a high content of cysteine residues that bind various heavy metals. The sequence is that of Metallothionein-like protein 1 (METAL1) from Coffea arabica (Arabian coffee).